Reading from the N-terminus, the 519-residue chain is Glutamate--cysteine ligase (519 aa).

This sequence belongs to the glutamate--cysteine ligase type 1 family. Type 1 subfamily.

It catalyses the reaction L-cysteine + L-glutamate + ATP = gamma-L-glutamyl-L-cysteine + ADP + phosphate + H(+). The protein operates within sulfur metabolism; glutathione biosynthesis; glutathione from L-cysteine and L-glutamate: step 1/2. The protein is Glutamate--cysteine ligase of Yersinia pseudotuberculosis serotype I (strain IP32953).